The chain runs to 226 residues: Cytidylate kinase (226 aa).

10-18 is an ATP binding site; sequence GPAGAGKST.

Belongs to the cytidylate kinase family. Type 1 subfamily.

The protein localises to the cytoplasm. The catalysed reaction is CMP + ATP = CDP + ADP. The enzyme catalyses dCMP + ATP = dCDP + ADP. The chain is Cytidylate kinase from Caldicellulosiruptor saccharolyticus (strain ATCC 43494 / DSM 8903 / Tp8T 6331).